A 299-amino-acid polypeptide reads, in one-letter code: AUGMIN subunit 1 (299 aa).

S2 is subject to N-acetylserine. 2 coiled-coil regions span residues 76–96 (RLKASEYRAQAARIREILESA) and 164–184 (RKAIQRLTYLKKILAQLEDDV).

The protein belongs to the HAUS1 family. Part of the augmin complex composed of 8 subunits. The complex acts on microtubules and interacts with gamma-tubulin in spindles and the phragmoplast. Interacts with AUG3.

The protein localises to the cytoplasm. Its subcellular location is the cytoskeleton. It localises to the spindle. It is found in the phragmoplast. Functionally, involved in microtubules reorganization during spindle and phragmoplast development. This is AUGMIN subunit 1 from Arabidopsis thaliana (Mouse-ear cress).